The sequence spans 415 residues: Acetyl-CoA acetyltransferase 1 (415 aa).

C99 (acyl-thioester intermediate) is an active-site residue. K239 is a binding site for CoA. A256 is a K(+) binding site. S260 provides a ligand contact to CoA. V357 serves as a coordination point for K(+). Residues H361 and C391 each act as proton acceptor in the active site.

Belongs to the thiolase-like superfamily. Thiolase family. As to expression, expressed in the vascular system of roots, cotyledons, young leaves, fully expanded leaves, stems, flowers, and funiculi of siliques.

The protein localises to the cytoplasm. It localises to the peroxisome. The enzyme catalyses 2 acetyl-CoA = acetoacetyl-CoA + CoA. It participates in metabolic intermediate biosynthesis; (R)-mevalonate biosynthesis; (R)-mevalonate from acetyl-CoA: step 1/3. Its function is as follows. Catalyzes the condensation of two molecules of acetyl-CoA to produce acetoacetyl-CoA. The sequence is that of Acetyl-CoA acetyltransferase 1 from Arabidopsis thaliana (Mouse-ear cress).